The sequence spans 630 residues: A-type voltage-gated potassium channel KCND2 (630 aa).

Topologically, residues 1-184 are cytoplasmic; it reads MAAGVAAWLP…FENPHTSTMA (184 aa). Residues 2–20 form an interaction with KCNIP1, KCNIP2, and other family members region; the sequence is AAGVAAWLPFARAAAIGWM. At Thr-38 the chain carries Phosphothreonine. The interval 71–90 is interaction with KCNIP1; it reads ERDFFYHPETQQYFFDRDPD. 4 residues coordinate Zn(2+): His-105, Cys-111, Cys-132, and Cys-133. A helical membrane pass occupies residues 185–206; sequence LVFYYVTGFFIAVSVIANVVET. Topologically, residues 207 to 226 are extracellular; that stretch reads VPCGSSPGHIKELPCGERYA. A helical membrane pass occupies residues 227–249; the sequence is VAFFCLDTACVMIFTVEYLLRLA. Residues 250–256 lie on the Cytoplasmic side of the membrane; sequence AAPSRYR. Residues 257 to 281 form a helical membrane-spanning segment; it reads FVRSVMSIIDVVAILPYYIGLVMTD. Residues 282 to 287 lie on the Extracellular side of the membrane; that stretch reads NEDVSG. The chain crosses the membrane as a helical; Voltage-sensor span at residues 288-307; sequence AFVTLRVFRVFRIFKFSRHS. At 308–321 the chain is on the cytoplasmic side; it reads QGLRILGYTLKSCA. The S4-S5 linker stretch occupies residues 308–321; that stretch reads QGLRILGYTLKSCA. The chain crosses the membrane as a helical span at residues 322 to 345; the sequence is SELGFLLFSLTMAIIIFATVMFYA. Topologically, residues 346–357 are extracellular; it reads EKGSSASKFTSI. The segment at residues 358-369 is an intramembrane region (helical); sequence PAAFWYTIVTMT. Thr-370, Leu-371, Gly-372, and Tyr-373 together coordinate K(+). Residues 370–375 carry the Selectivity filter motif; that stretch reads TLGYGD. An intramembrane segment occupies 370–377; it reads TLGYGDMV. Residues 378-380 lie on the Extracellular side of the membrane; that stretch reads PKT. A helical membrane pass occupies residues 381–403; the sequence is IAGKIFGSICSLSGVLVIALPVP. The Cytoplasmic portion of the chain corresponds to 404-630; that stretch reads VIVSNFSRIY…GGNIVRVSAL (227 aa). Ser-438 is modified (phosphoserine). The required for dendritic targeting stretch occupies residues 474-489; it reads FETQHHHLLHCLEKTT. The tract at residues 474-630 is important for normal channel activation and inactivation, for interaction with KCNIP2, and probably other family members as well; the sequence is FETQHHHLLH…GGNIVRVSAL (157 aa). Residues Ser-548, Ser-552, Ser-572, and Ser-575 each carry the phosphoserine modification. The tract at residues 600 to 630 is disordered; the sequence is IPTPPVTTPEGDDRPESPEYSGGNIVRVSAL. Residues Thr-602 and Thr-607 each carry the phosphothreonine modification. Ser-616 bears the Phosphoserine mark. The PDZ-binding motif lies at 627-630; sequence VSAL.

This sequence belongs to the potassium channel family. D (Shal) (TC 1.A.1.2) subfamily. Kv4.2/KCND2 sub-subfamily. As to quaternary structure, homotetramer or heterotetramer with KCND1 or KCND3. Associates with the regulatory subunits KCNIP2, KCNIP3 and KCNIP4. Interacts with the regulatory subunit KCNIP1; this interaction mediates the capture of both the N- and C-terminus of KCND2, preventing N-type inactivation and stabilizing the S6 conformation, thereby accelerating closed state inactivation and recovery. In vivo, probably exists as heteromeric complex containing variable proportions of KCND1, KCND2, KCND3, KCNIP1, KCNIP2, KCNIP3, KCNIP4, DPP6 and DPP10. The tetrameric channel can associate with up to four regulatory subunits, such as KCNIP2 or KCNIP4. Interaction with four KCNIP4 chains does not reduce interaction with DPP10. Interacts with DLG4 and NCS1/FREQ. Interacts with DLG1. Probably part of a complex consisting of KCNIP1, KCNIP2 isoform 3 and KCND2. Interacts with FLNA, FLNC and DPP10. Interacts (via S1 and S2 helices) with DPP6; this interaction stabilizes the conformation of the S1-S2 helices and facilitates S4 conformational change, including S4 sliding up and down, thereby accelerating activation, inactivation, and recovery. Phosphorylation at Ser-438 in response to MAPK activation is increased in stimulated dendrites. Interaction with KCNIP2 and DPP6 propomtes phosphorylation by PKA at Ser-552. Phosphorylation at Ser-552 has no effect on interaction with KCNIP3, but is required for the regulation of channel activity by KCNIP3. Phosphorylation at Ser-552 leads to KCND2 internalization. Phosphorylated by MAPK in response to signaling via the metabotropic glutamate receptor GRM5. Phosphorylation at Ser-616 is required for the down-regulation of neuronal A-type currents in response to signaling via GRM5. Detected in ovary, in corpus luteum and in granulosa and theca cells in the follicle (at protein level). Highly expressed throughout the brain. Detected in amygdala, caudate nucleus, cerebellum, hippocampus, substantia nigra and thalamus. Expression is not detectable or very low in heart, kidney, liver, lung, pancreas and skeletal muscle. Not detectable in human heart atrium.

It localises to the cell membrane. Its subcellular location is the cell projection. The protein localises to the dendrite. The protein resides in the synapse. It is found in the perikaryon. It localises to the postsynaptic cell membrane. Its subcellular location is the dendritic spine. The protein localises to the cell junction. It catalyses the reaction K(+)(in) = K(+)(out). Voltage-gated potassium channel that mediates transmembrane potassium transport in excitable membranes, primarily in the brain. Mediates the major part of the dendritic A-type current I(SA) in brain neurons. This current is activated at membrane potentials that are below the threshold for action potentials. It regulates neuronal excitability, prolongs the latency before the first spike in a series of action potentials, regulates the frequency of repetitive action potential firing, shortens the duration of action potentials and regulates the back-propagation of action potentials from the neuronal cell body to the dendrites. Contributes to the regulation of the circadian rhythm of action potential firing in suprachiasmatic nucleus neurons, which regulates the circadian rhythm of locomotor activity. Functions downstream of the metabotropic glutamate receptor GRM5 and plays a role in neuronal excitability and in nociception mediated by activation of GRM5. Mediates the transient outward current I(to) in rodent heart left ventricle apex cells, but not in human heart, where this current is mediated by another family member. Forms tetrameric potassium-selective channels through which potassium ions pass in accordance with their electrochemical gradient. The channel alternates between opened and closed conformations in response to the voltage difference across the membrane. Can form functional homotetrameric channels and heterotetrameric channels that contain variable proportions of KCND2 and KCND3; channel properties depend on the type of pore-forming alpha subunits that are part of the channel. In vivo, membranes probably contain a mixture of heteromeric potassium channel complexes. Interaction with specific isoforms of the regulatory subunits KCNIP1, KCNIP2, KCNIP3 or KCNIP4 strongly increases expression at the cell surface and thereby increases channel activity; it modulates the kinetics of channel activation and inactivation, shifts the threshold for channel activation to more negative voltage values, shifts the threshold for inactivation to less negative voltages and accelerates recovery after inactivation. Likewise, interaction with DPP6 or DPP10 promotes expression at the cell membrane and regulates both channel characteristics and activity. Upon depolarization, the channel goes from a resting closed state (C state) to an activated but non-conducting state (C* state), from there, the channel may either inactivate (I state) or open (O state). This is A-type voltage-gated potassium channel KCND2 from Homo sapiens (Human).